A 1162-amino-acid polypeptide reads, in one-letter code: MSEPDDVDTVKERLAEDRQNIHIQNEYQDISYTIIKARIGMLATAIGGPDHSVDSVNPPYKVGDDCLACIKDLIRWFKLVDDNQKRWDVEMATAEFKILQNDLIPILLDWEAKNSAATRKSKKTGEDISIFFPNKSYHDRIALGALQLMVLMTWPLIITDQSSYNQVNYYFELKKHQLLYKHAILTTENGKVLKAAIRLALNVMSVDVDHRTARDDSLIRMVLNFLKNVVAIEPGEVTISSVKRLKRPLTMAEMLPTNITVDDISINSVITAFDKNKVFGFLLTVASSLSDAVDPNFVSWPLLEVMFFLTKDINPIRLFKNQRKSYKLGTDHEITDSNMTTSGKHLSELLAKEHEKKLNVIKNTSSRHSRFGGLLSIQTPQNTRLTIASNSVNMRDDAALQELDSRKKWNKTITMRLDVIEGLSSSFFSTEGNSIYMSSDNITSIKEFLADFVDSSFNLLLQNATDSFTSEIQDQLPLHKIEYMLFISWFVKFQRSRCIYEIDATPDYVSGALLDECYILFTKYLRESYEQKNWPVVHAGMLLFTEYLEFLLSLDQSWEADVQAVISKILSENMLQLLASLPKSATSHSSQYVKACINLTHVVLKTIDKFDENSSLTVESKRKRKVNLNHTAIEKYAKDNDLDYESAFDILEEQFKQVTINFDKVFRGYLTEPTISTYIRYLQSYKELEDKDLIRVLKFFQRVFVKAKEELFLFRIDFMILCREILSQQGLPTTSELRTHFTKFNEYYLKQLKNKLKKMPSLYINILFPMLHDSQISYYMRHGKMKLTEGTPDIVLPSTFINIPDEGSLPKKVLLDMQVGILVSSLIDDGYEDLIEALLLNLQSSFDGLKGKVAEGINSLEEERVKKVAFNATNSEIKRALYQQPEFRRLLILAGFAIPEANQPACYFINNKTPTEVQLVIETIQKHRSLPFESEIGKPASYYLSSHYQEYEDPEEYGSDLNNGSYFEDLEIMDKRTEGRELSKGKAQSKLVQRSKGKRKAIAHHPEENESDFEANASSSTKLPVVSKEYIMDSDDEDPDFGAIFFENETYLRQLLDKHNGSLTETQFSLFAQFCEERVKNNGQLRNDYSALFNETPKSPIFSDVDAETIIIGSASLPSLANEPIETQVVSSEEYSSHPLEEEVTSEQRKRKKPRIESDTEY.

2 disordered regions span residues 977–1017 and 1127–1162; these read TEGR…EANA and TQVV…DTEY. Residues 993–1003 show a composition bias toward basic residues; that stretch reads QRSKGKRKAIA.

Belongs to the timeless family. Component of the fork protection complex (FPC) consisting of TOF1 and CSM3.

Its subcellular location is the nucleus. In terms of biological role, forms a fork protection complex (FPC) with CSM3 and which is required for chromosome segregation during meiosis and DNA damage repair. FPC coordinates leading and lagging strand synthesis and moves with the replication fork. FPC stabilizes replication forks in a configuration that is recognized by replication checkpoint sensors. The sequence is that of Topoisomerase 1-associated factor 1 (TOF1) from Kluyveromyces lactis (strain ATCC 8585 / CBS 2359 / DSM 70799 / NBRC 1267 / NRRL Y-1140 / WM37) (Yeast).